The sequence spans 1196 residues: Phosphatidylinositol-3,5-bisphosphate 3-phosphatase MTMR3 (1196 aa).

Serine 8 is modified (phosphoserine). The region spanning 155-576 is the Myotubularin phosphatase domain; sequence EHVTSRFKNE…RNLMLWSAVY (422 aa). The a 1,2-diacyl-sn-glycero-3-phospho-(1D-myo-inositol-3,5-bisphosphate) site is built by asparagine 326, asparagine 351, and isoleucine 352. The a 1,2-diacyl-sn-glycero-3-phospho-(1D-myo-inositol-3-phosphate) site is built by asparagine 326, asparagine 351, and isoleucine 352. The active-site Phosphocysteine intermediate is the cysteine 413. A 1,2-diacyl-sn-glycero-3-phospho-(1D-myo-inositol-3,5-bisphosphate) is bound by residues serine 414, aspartate 415, glycine 416, tryptophan 417, aspartate 418, arginine 419, lysine 455, and arginine 459. A 1,2-diacyl-sn-glycero-3-phospho-(1D-myo-inositol-3-phosphate)-binding residues include serine 414, aspartate 415, glycine 416, tryptophan 417, aspartate 418, and arginine 419. A 1,2-diacyl-sn-glycero-3-phospho-(1D-myo-inositol-3-phosphate) is bound at residue arginine 459. The interval 587–612 is disordered; the sequence is DDSCAPYPVPGTSPDEPPLSRLPKTR. Residues 593 to 603 show a composition bias toward pro residues; that stretch reads YPVPGTSPDEP. Phosphoserine is present on residues serine 613, serine 633, serine 647, and serine 651. Disordered stretches follow at residues 697–719 and 855–900; these read TKEE…EVKE and ESGP…HRTS. Residue serine 907 is modified to Phosphoserine. Residues 993 to 1008 show a composition bias toward polar residues; the sequence is NSHSGRPSTTSSPDQP. The tract at residues 993 to 1019 is disordered; that stretch reads NSHSGRPSTTSSPDQPSRSHLDDDGMP. Residues 1027 to 1060 are a coiled coil; the sequence is QRLRQIESGHQQEVETLKKQVQELKSRLESQYLT. Serine 1062 bears the Phosphoserine mark. The FYVE-type zinc finger occupies 1117–1177; the sequence is DHLAAHCYAC…VCKSCYSSLH (61 aa). Cysteine 1123, cysteine 1126, cysteine 1139, cysteine 1142, cysteine 1147, cysteine 1150, cysteine 1169, and cysteine 1172 together coordinate Zn(2+).

The protein belongs to the protein-tyrosine phosphatase family. Non-receptor class myotubularin subfamily. In terms of assembly, forms heterodimers with MTMR4 that recruit both CEP55 and PLK1; occurs during early mitosis, regulates the phosphorylation of CEP55 by PLK1 and its recruitment to the midbody where it mediates cell abscission.

It is found in the cytoplasm. It localises to the cytosol. The protein localises to the membrane. The catalysed reaction is a 1,2-diacyl-sn-glycero-3-phospho-(1D-myo-inositol-3,5-bisphosphate) + H2O = a 1,2-diacyl-sn-glycero-3-phospho-(1D-myo-inositol-5-phosphate) + phosphate. It catalyses the reaction a 1,2-diacyl-sn-glycero-3-phospho-(1D-myo-inositol-3-phosphate) + H2O = a 1,2-diacyl-sn-glycero-3-phospho-(1D-myo-inositol) + phosphate. It carries out the reaction 1,2-dihexadecanoyl-sn-glycero-3-phospho-(1D-myo-inositol-3-phosphate) + H2O = 1,2-dihexadecanoyl-sn-glycero-3-phospho-(1D-myo-inositol) + phosphate. The enzyme catalyses 1,2-dioctanoyl-sn-glycero-3-phospho-(1-D-myo-inositol-3-phosphate) + H2O = 1,2-dioctanoyl-sn-glycero-3-phospho-(1D-myo-inositol) + phosphate. The catalysed reaction is 1,2-dihexadecanoyl-sn-glycero-3-phospho-(1D-myo-inositol-3,5-phosphate) + H2O = 1,2-dihexadecanoyl-sn-glycero-3-phospho-(1D-myo-inositol-5-phosphate) + phosphate. Lipid phosphatase that specifically dephosphorylates the D-3 position of phosphatidylinositol 3-phosphate and phosphatidylinositol 3,5-bisphosphate, generating phosphatidylinositol and phosphatidylinositol 5-phosphate. Decreases the levels of phosphatidylinositol 3-phosphate, a phospholipid found in cell membranes where it acts as key regulator of both cell signaling and intracellular membrane traffic. Could also have a molecular sequestering/adapter activity and regulate biological processes independently of its phosphatase activity. It includes the regulation of midbody abscission during mitotic cytokinesis. The protein is Phosphatidylinositol-3,5-bisphosphate 3-phosphatase MTMR3 of Mus musculus (Mouse).